A 271-amino-acid polypeptide reads, in one-letter code: 5-deoxy-glucuronate isomerase (271 aa).

The protein belongs to the isomerase IolB family.

It carries out the reaction 5-deoxy-D-glucuronate = 5-dehydro-2-deoxy-D-gluconate. Its pathway is polyol metabolism; myo-inositol degradation into acetyl-CoA; acetyl-CoA from myo-inositol: step 4/7. In terms of biological role, involved in the isomerization of 5-deoxy-glucuronate (5DG) to 5-dehydro-2-deoxy-D-gluconate (DKG or 2-deoxy-5-keto-D-gluconate). This Bacillus subtilis subsp. natto protein is 5-deoxy-glucuronate isomerase.